A 282-amino-acid polypeptide reads, in one-letter code: Phycocyanobilin lyase subunit beta (282 aa).

The protein belongs to the CpcE/RpcE/PecE family. As to quaternary structure, cpcE and CpcF associate to form a lyase.

Functionally, required for the chromophorylation of the CpcA gene product. The protein is Phycocyanobilin lyase subunit beta (cpcF1) of Pseudanabaena tenuis (strain PCC 7409).